The primary structure comprises 502 residues: Histidine--tRNA ligase (502 aa).

Belongs to the class-II aminoacyl-tRNA synthetase family. Homodimer.

It localises to the cytoplasm. It carries out the reaction tRNA(His) + L-histidine + ATP = L-histidyl-tRNA(His) + AMP + diphosphate + H(+). In Brucella ovis (strain ATCC 25840 / 63/290 / NCTC 10512), this protein is Histidine--tRNA ligase.